A 225-amino-acid polypeptide reads, in one-letter code: T4 protein (225 aa).

This sequence belongs to the poxviruses B9 family.

The sequence is that of T4 protein from Rabbit fibroma virus (strain Kasza) (RFV).